Reading from the N-terminus, the 33-residue chain is Cysteine-rich venom protein (33 aa).

Positions 1–33 (NVDFNSESTRRKKKQKEIVDLHNSLRRRVSPTA) are disordered. Residues 24–33 (SLRRRVSPTA) show a composition bias toward basic residues.

It belongs to the CRISP family. In terms of processing, contains 8 disulfide bonds. Expressed by the venom gland.

It localises to the secreted. Its function is as follows. Blocks contraction of smooth muscle elicited by high potassium-induced depolarization, but does not block caffeine-stimulated contraction. May target voltage-gated calcium channels on smooth muscle (Cav). This chain is Cysteine-rich venom protein, found in Naja naja (Indian cobra).